Consider the following 205-residue polypeptide: Large ribosomal subunit protein uL18 (205 aa).

It belongs to the universal ribosomal protein uL18 family. Part of the 50S ribosomal subunit. Contacts the 5S and 23S rRNAs.

Its function is as follows. This is one of the proteins that bind and probably mediate the attachment of the 5S RNA into the large ribosomal subunit, where it forms part of the central protuberance. The chain is Large ribosomal subunit protein uL18 from Pyrobaculum islandicum (strain DSM 4184 / JCM 9189 / GEO3).